Consider the following 351-residue polypeptide: Transcriptional activator POG1 (351 aa).

Basic and acidic residues predominate over residues Met1 to His26. The segment at Met1 to Lys56 is disordered. Residues Thr27–Lys56 are compositionally biased toward polar residues. 2 positions are modified to phosphoserine: Ser152 and Ser168. Disordered stretches follow at residues Pro234–Met256 and Gln291–Thr351. Over residues Gln241–Met256 the composition is skewed to polar residues. A Phosphoserine modification is found at Ser314.

It belongs to the POG1 family. Phosphorylated by CDC28.

It localises to the nucleus. Its function is as follows. Transcriptional activator which promotes cell cycle recovery with CLN2, after pheromone induced G1 arrest, probably inhibiting the ability of STE20 to activate the pheromone response pathway. Binds the promoters of genes that function in cell cycle regulation, cytoskeletal organization, and spindle assembly. May also be involved in stress-resistance. This is Transcriptional activator POG1 (POG1) from Saccharomyces cerevisiae (strain ATCC 204508 / S288c) (Baker's yeast).